We begin with the raw amino-acid sequence, 199 residues long: MCRTIATFPNTCLERAKEFKTRLGIFLHKSELSSDTGGNGKFEWASKLSKERSFSEDVLGWRESFQSLLNSKNGVAAFHAFLKTEFSEENLEFWLACEEFKKIRSATKLASRAHHIFDEYIRSEAPKEVNIDHETRELTKTNLQAATTSCFDVAQGKTRTLMEKDSYPRFLKSPAYRDLAAQASATSASGSSPAEPSHT.

Residues cysteine 2 and cysteine 12 are each lipidated (S-palmitoyl cysteine). The RGS domain occupies 64-180 (SFQSLLNSKN…LKSPAYRDLA (117 aa)). Tyrosine 167 and tyrosine 176 each carry phosphotyrosine.

Interacts with GNAI1 and GNAQ. Interacts with GNAI3, GNAI3 and GNAO1. In terms of processing, palmitoylated on Cys-2 and/or Cys-12. Post-translationally, phosphorylated. Phosphorylation at Tyr-167 by EGFR enhances GTPase accelerating (GAP) activity toward GNAI1. As to expression, predominantly found in the retina. Some expression has been found in the liver.

It is found in the membrane. Functionally, regulates G protein-coupled receptor signaling cascades. Inhibits signal transduction by increasing the GTPase activity of G protein alpha subunits, thereby driving them into their inactive GDP-bound form. Plays an important role in the phototransduction cascade by regulating the lifetime and effective concentration of activated transducin alpha. May regulate extra and intracellular mitogenic signals. The chain is Regulator of G-protein signaling 16 (Rgs16) from Rattus norvegicus (Rat).